Here is a 102-residue protein sequence, read N- to C-terminus: Small ribosomal subunit protein uS10 (102 aa).

The protein belongs to the universal ribosomal protein uS10 family. Part of the 30S ribosomal subunit.

Its function is as follows. Involved in the binding of tRNA to the ribosomes. The chain is Small ribosomal subunit protein uS10 from Methanoculleus marisnigri (strain ATCC 35101 / DSM 1498 / JR1).